A 189-amino-acid polypeptide reads, in one-letter code: GMP synthase [glutamine-hydrolyzing] subunit A (189 aa).

In terms of domain architecture, Glutamine amidotransferase type-1 spans 1–189 (MIVILNNGGQ…CKKCGFEFEE (189 aa)). Residue cysteine 76 is the Nucleophile of the active site. Active-site residues include histidine 163 and glutamate 165.

As to quaternary structure, heterodimer composed of a glutamine amidotransferase subunit (A) and a GMP-binding subunit (B).

The catalysed reaction is XMP + L-glutamine + ATP + H2O = GMP + L-glutamate + AMP + diphosphate + 2 H(+). The protein operates within purine metabolism; GMP biosynthesis; GMP from XMP (L-Gln route): step 1/1. Functionally, catalyzes the synthesis of GMP from XMP. The chain is GMP synthase [glutamine-hydrolyzing] subunit A from Methanococcus maripaludis (strain C5 / ATCC BAA-1333).